The primary structure comprises 349 residues: ATPase GET3 (349 aa).

Lysine 27 to threonine 34 lines the ATP pocket. Residue aspartate 58 is part of the active site. The ATP site is built by glutamate 240 and asparagine 267. Zn(2+) is bound by residues cysteine 280 and cysteine 283.

The protein belongs to the arsA ATPase family. In terms of assembly, homodimer. Component of the Golgi to ER traffic (GET) complex, which is composed of GET1, GET2 and GET3. Within the complex, GET1 and GET2 form a heterotetramer which is stabilized by phosphatidylinositol binding and which binds to the GET3 homodimer. Interacts with the chloride channel protein GEF1.

The protein localises to the cytoplasm. It localises to the endoplasmic reticulum. It is found in the golgi apparatus. Functionally, ATPase required for the post-translational delivery of tail-anchored (TA) proteins to the endoplasmic reticulum. Recognizes and selectively binds the transmembrane domain of TA proteins in the cytosol. This complex then targets to the endoplasmic reticulum by membrane-bound receptors GET1 and GET2, where the tail-anchored protein is released for insertion. This process is regulated by ATP binding and hydrolysis. ATP binding drives the homodimer towards the closed dimer state, facilitating recognition of newly synthesized TA membrane proteins. ATP hydrolysis is required for insertion. Subsequently, the homodimer reverts towards the open dimer state, lowering its affinity for the GET1-GET2 receptor, and returning it to the cytosol to initiate a new round of targeting. Cooperates with the HDEL receptor ERD2 to mediate the ATP-dependent retrieval of resident ER proteins that contain a C-terminal H-D-E-L retention signal from the Golgi to the ER. Involved in low-level resistance to the oxyanions arsenite and arsenate, and in heat tolerance. This is ATPase GET3 from Eremothecium gossypii (strain ATCC 10895 / CBS 109.51 / FGSC 9923 / NRRL Y-1056) (Yeast).